Consider the following 503-residue polypeptide: Major facilitator superfamily domain-containing protein 4A (503 aa).

A run of 12 helical transmembrane segments spans residues 19 to 39 (LTYW…GPTL), 53 to 73 (ITWV…LGGV), 82 to 102 (LFLL…IPFC), 105 to 125 (VGVL…IDTI), 139 to 159 (AIFL…SPLI), 214 to 234 (YAFW…FYLI), 289 to 309 (IWNA…TLFM), 338 to 358 (GYLP…SIPV), 366 to 386 (SMLF…LLSQ), 392 to 412 (MFVG…SMLA), 427 to 447 (VLVT…GSVM), and 455 to 475 (FLVC…VLLV). Residues 484–503 (SEDSACKPPGLDGEATSYQS) form a disordered region.

The protein belongs to the major facilitator superfamily.

The protein resides in the membrane. This chain is Major facilitator superfamily domain-containing protein 4A (mfsd4a), found in Xenopus tropicalis (Western clawed frog).